The primary structure comprises 598 residues: Arylsulfate sulfotransferase AssT (598 aa).

A signal peptide spans 1-27 (MFHPYRKTLLSGTVALALGLFATGAIA). 4-methylumbelliferone-binding residues include His279 and His383. A disulfide bridge links Cys445 with Cys451. His463 contacts 4-methylumbelliferone. Catalysis depends on His463, which acts as the Nucleophile; sulfurylated histidine covalent intermediate.

Belongs to the aryl sulfotransferase family. As to quaternary structure, monomer.

It localises to the periplasm. The catalysed reaction is an aryl sulfate + a phenol = an aryl sulfate + a phenol. The enzyme catalyses 4-methylumbelliferone sulfate + phenol = phenyl sulfate + 4-methylumbelliferone. It carries out the reaction 2-naphthyl sulfate + phenol = phenyl sulfate + 2-naphthol. Functionally, catalyzes the transfer of a sulfate group from a phenyl sulfate ester to other phenolic compounds. Is able to use several substrate donors and acceptors in vitro: using phenol as an acceptor substrate, 4-methylumbelliferyl sulfate is the best donor substrate, followed by beta-naphthyl sulfate, p-nitrophenyl sulfate (PNS), and alpha-naphthyl sulfate; using PNS as a donor substrate, alpha-naphthol is the best acceptor substrate, followed by phenol, resorcinol, p-acetaminophen, tyramine, and tyrosine. Cannot use 3'-phosphoadenosine-5'-phophosulfate (PAPS), the donor substrate of mammalian sulfotransferase. May be a detoxifying enzyme, converting toxic phenolic compounds into non-toxic materials. The chain is Arylsulfate sulfotransferase AssT from Lelliottia amnigena (Enterobacter amnigenus).